A 121-amino-acid chain; its full sequence is uncharacterized protein (121 aa).

3 helical membrane-spanning segments follow: residues 1 to 21, 55 to 75, and 92 to 112; these read MILW…IMPV, LKYI…FCSI, and LFFK…IHFL.

The protein localises to the membrane. This is an uncharacterized protein from Saccharomyces cerevisiae (strain ATCC 204508 / S288c) (Baker's yeast).